The following is a 387-amino-acid chain: ADP,ATP carrier protein 2, mitochondrial (387 aa).

A mitochondrion-targeting transit peptide spans 1–77 (MADQANQPTV…PVMPTPLFAN (77 aa)). 3 Solcar repeats span residues 85–178 (KNFM…FKRL), 190–282 (KWFA…IKPV), and 290–376 (DNFF…LQIL). A run of 5 helical transmembrane segments spans residues 87-114 (FMID…VKLL), 155-179 (TANV…KRLF), 188-208 (YWKW…SSLF), 258-279 (FNIS…YDSI), and 293-313 (FASF…SYPI). Arginine 160 and lysine 172 together coordinate ADP. Arginine 317 is an ADP binding site. Residues 317-322 (RRRMMM) are important for transport activity. The Nucleotide carrier signature motif signature appears at 317–322 (RRRMMM). The helical transmembrane segment at 353–373 (AGANILRAIAGAGVLSGYDQL) threads the bilayer.

This sequence belongs to the mitochondrial carrier (TC 2.A.29) family. Monomer.

Its subcellular location is the mitochondrion inner membrane. It catalyses the reaction ADP(in) + ATP(out) = ADP(out) + ATP(in). The matrix-open state (m-state) is inhibited by the membrane-permeable bongkrekic acid (BKA). The cytoplasmic-open state (c-state) is inhibited by the membrane-impermeable toxic inhibitor carboxyatractyloside (CATR). In terms of biological role, ADP:ATP antiporter that mediates import of ADP into the mitochondrial matrix for ATP synthesis, and export of ATP out to fuel the cell. Cycles between the cytoplasmic-open state (c-state) and the matrix-open state (m-state): operates by the alternating access mechanism with a single substrate-binding site intermittently exposed to either the cytosolic (c-state) or matrix (m-state) side of the inner mitochondrial membrane. This chain is ADP,ATP carrier protein 2, mitochondrial (ANT2), found in Zea mays (Maize).